The chain runs to 232 residues: Octanoyltransferase (232 aa).

Residues 32–219 (NIIYDTLILL…SFKVFNFSSY (188 aa)) form the BPL/LPL catalytic domain. Residues 77–84 (RGGDITYH), 140–142 (AIG), and 153–155 (GFA) each bind substrate. Catalysis depends on Cys171, which acts as the Acyl-thioester intermediate.

Belongs to the LipB family.

Its subcellular location is the cytoplasm. It carries out the reaction octanoyl-[ACP] + L-lysyl-[protein] = N(6)-octanoyl-L-lysyl-[protein] + holo-[ACP] + H(+). It participates in protein modification; protein lipoylation via endogenous pathway; protein N(6)-(lipoyl)lysine from octanoyl-[acyl-carrier-protein]: step 1/2. Catalyzes the transfer of endogenously produced octanoic acid from octanoyl-acyl-carrier-protein onto the lipoyl domains of lipoate-dependent enzymes. Lipoyl-ACP can also act as a substrate although octanoyl-ACP is likely to be the physiological substrate. This is Octanoyltransferase from Dictyoglomus turgidum (strain DSM 6724 / Z-1310).